A 343-amino-acid chain; its full sequence is L-threonine 3-dehydrogenase (343 aa).

Cys-38 is a Zn(2+) binding site. Residues Thr-40 and His-43 each act as charge relay system in the active site. Zn(2+) is bound by residues His-63, Glu-64, Cys-93, Cys-96, Cys-99, and Cys-107. Residues Ile-175, Asp-195, Arg-200, 262–264 (LGI), and 286–287 (IY) contribute to the NAD(+) site.

Belongs to the zinc-containing alcohol dehydrogenase family. As to quaternary structure, homotetramer. Zn(2+) serves as cofactor.

Its subcellular location is the cytoplasm. The enzyme catalyses L-threonine + NAD(+) = (2S)-2-amino-3-oxobutanoate + NADH + H(+). It participates in amino-acid degradation; L-threonine degradation via oxydo-reductase pathway; glycine from L-threonine: step 1/2. Functionally, catalyzes the NAD(+)-dependent oxidation of L-threonine to 2-amino-3-ketobutyrate. This is L-threonine 3-dehydrogenase from Pectobacterium carotovorum subsp. carotovorum (strain PC1).